We begin with the raw amino-acid sequence, 765 residues long: FHF complex subunit HOOK interacting protein 2A (765 aa).

2 disordered regions span residues 193 to 236 and 532 to 561; these read TLKG…DHLS and TDISPENTLPNQEWLSSSPPATPDHPKNDG. Polar residues-rich tracts occupy residues 196 to 208 and 535 to 550; these read GQDSLSTDTGQSR and SPENTLPNQEWLSSSP.

This sequence belongs to the FHIP family. Expressed in all tissues tested, highly expressed brain. In terms of tissue distribution, only detected at high levels in testis.

In terms of biological role, required for proper functioning of the nervous system. The sequence is that of FHF complex subunit HOOK interacting protein 2A from Homo sapiens (Human).